The following is a 393-amino-acid chain: Putative cytochrome P450 143 (393 aa).

C342 contributes to the heme binding site.

This sequence belongs to the cytochrome P450 family. Requires heme as cofactor.

This chain is Putative cytochrome P450 143 (cyp143), found in Mycobacterium bovis (strain ATCC BAA-935 / AF2122/97).